A 141-amino-acid polypeptide reads, in one-letter code: VLSPADKTNVKATWDKIGGHAGEYGGEALERTFASFPTTKTYFPHFDLSPGSAQVKAHGKKVADALTNAVAHMDDLPAALSALSDLHAYKLRVDPVNFKLLSHCLLVTLACHHPAEFTPAVHASLDKFFSTVSTVLTSKYR.

A Globin domain is found at 1-141; it reads VLSPADKTNV…VSTVLTSKYR (141 aa). At Ser-3 the chain carries Phosphoserine. Lys-7 bears the N6-succinyllysine mark. Thr-8 bears the Phosphothreonine mark. An N6-succinyllysine modification is found at Lys-11. The residue at position 16 (Lys-16) is an N6-acetyllysine; alternate. Lys-16 carries the N6-succinyllysine; alternate modification. At Tyr-24 the chain carries Phosphotyrosine. Ser-35 is subject to Phosphoserine. Residue Lys-40 is modified to N6-succinyllysine. Ser-49 carries the phosphoserine modification. His-58 provides a ligand contact to O2. A heme b-binding site is contributed by His-87. Ser-102 carries the post-translational modification Phosphoserine. A Phosphothreonine modification is found at Thr-108. Ser-124 is modified (phosphoserine). Residues Thr-134 and Thr-137 each carry the phosphothreonine modification. At Ser-138 the chain carries Phosphoserine.

This sequence belongs to the globin family. In terms of assembly, heterotetramer of two alpha chains and two beta chains. In terms of tissue distribution, red blood cells.

Involved in oxygen transport from the lung to the various peripheral tissues. In terms of biological role, hemopressin acts as an antagonist peptide of the cannabinoid receptor CNR1. Hemopressin-binding efficiently blocks cannabinoid receptor CNR1 and subsequent signaling. The chain is Hemoglobin subunit alpha (HBA) from Pteronura brasiliensis (Giant otter).